A 118-amino-acid chain; its full sequence is Large ribosomal subunit protein bL20 (118 aa).

It belongs to the bacterial ribosomal protein bL20 family.

Functionally, binds directly to 23S ribosomal RNA and is necessary for the in vitro assembly process of the 50S ribosomal subunit. It is not involved in the protein synthesizing functions of that subunit. In Lachnoclostridium phytofermentans (strain ATCC 700394 / DSM 18823 / ISDg) (Clostridium phytofermentans), this protein is Large ribosomal subunit protein bL20.